The sequence spans 507 residues: uncharacterized protein (507 aa).

14 helical membrane passes run 8–28, 41–61, 86–106, 130–150, 171–191, 193–213, 235–255, 275–295, 323–343, 355–375, 387–407, 408–428, 444–464, and 467–487; these read VKGV…AYLV, VGLF…RAFG, IVFV…LVVI, INIL…VAFF, ILSV…HNAY, PSVS…YIVV, LFSY…LGYL, VAMP…AVLF, IIVT…INIL, IQIL…FNIL, ILYI…PKFG, IIGA…FQIW, ILVI…KDLI, and VILQ…LGIF.

It belongs to the polysaccharide synthase family.

The protein resides in the cell membrane. This is an uncharacterized protein from Methanocaldococcus jannaschii (strain ATCC 43067 / DSM 2661 / JAL-1 / JCM 10045 / NBRC 100440) (Methanococcus jannaschii).